We begin with the raw amino-acid sequence, 341 residues long: Fructose-1,6-bisphosphatase, cytosolic (341 aa).

E71, E100, D121, L123, and D124 together coordinate Mg(2+). Substrate contacts are provided by residues 124–127, N215, Y247, Y267, and K277; that span reads DGSS. Mg(2+) is bound at residue E283.

It belongs to the FBPase class 1 family. The cofactor is Mg(2+).

The protein resides in the cytoplasm. The enzyme catalyses beta-D-fructose 1,6-bisphosphate + H2O = beta-D-fructose 6-phosphate + phosphate. This chain is Fructose-1,6-bisphosphatase, cytosolic, found in Spinacia oleracea (Spinach).